Here is a 757-residue protein sequence, read N- to C-terminus: Probable serine/threonine-protein kinase pknA2 (757 aa).

The 261-residue stretch at 14 to 274 (YRIVRNIAEG…DGAAAAEELS (261 aa)) folds into the Protein kinase domain. ATP contacts are provided by residues 20-28 (IAEGGMATV) and Lys-43. Asp-140 serves as the catalytic Proton acceptor. The interval 344–387 (DTGGAADVNPPAPPVAPTTALDSSTPADASAPHKTQIMAQSGSE) is disordered. PASTA domains lie at 466 to 539 (DANA…VVSK), 545 to 614 (TIPK…TLSK), and 615 to 681 (GPMP…VISK).

It belongs to the protein kinase superfamily. Ser/Thr protein kinase family.

It carries out the reaction L-seryl-[protein] + ATP = O-phospho-L-seryl-[protein] + ADP + H(+). The enzyme catalyses L-threonyl-[protein] + ATP = O-phospho-L-threonyl-[protein] + ADP + H(+). In Bifidobacterium longum (strain NCC 2705), this protein is Probable serine/threonine-protein kinase pknA2 (pknA2).